The following is a 451-amino-acid chain: Phosphoglucosamine mutase (451 aa).

Residue S101 is the Phosphoserine intermediate of the active site. 4 residues coordinate Mg(2+): S101, D243, D245, and D247. At S101 the chain carries Phosphoserine.

This sequence belongs to the phosphohexose mutase family. Mg(2+) is required as a cofactor. In terms of processing, activated by phosphorylation.

The catalysed reaction is alpha-D-glucosamine 1-phosphate = D-glucosamine 6-phosphate. Its function is as follows. Catalyzes the conversion of glucosamine-6-phosphate to glucosamine-1-phosphate. This is Phosphoglucosamine mutase from Geobacter metallireducens (strain ATCC 53774 / DSM 7210 / GS-15).